We begin with the raw amino-acid sequence, 366 residues long: Chorismate synthase (366 aa).

NADP(+)-binding residues include Arg48 and Arg54. Residues 125–127, 238–239, Gly278, 293–297, and Arg319 contribute to the FMN site; these read RSS, NA, and KPTSS.

The protein belongs to the chorismate synthase family. Homotetramer. Requires FMNH2 as cofactor.

The enzyme catalyses 5-O-(1-carboxyvinyl)-3-phosphoshikimate = chorismate + phosphate. It participates in metabolic intermediate biosynthesis; chorismate biosynthesis; chorismate from D-erythrose 4-phosphate and phosphoenolpyruvate: step 7/7. In terms of biological role, catalyzes the anti-1,4-elimination of the C-3 phosphate and the C-6 proR hydrogen from 5-enolpyruvylshikimate-3-phosphate (EPSP) to yield chorismate, which is the branch point compound that serves as the starting substrate for the three terminal pathways of aromatic amino acid biosynthesis. This reaction introduces a second double bond into the aromatic ring system. In Neisseria meningitidis serogroup A / serotype 4A (strain DSM 15465 / Z2491), this protein is Chorismate synthase.